A 380-amino-acid polypeptide reads, in one-letter code: Enoyl-[acyl-carrier-protein] reductase, mitochondrial (380 aa).

The transit peptide at 1–9 directs the protein to the mitochondrion; sequence MLPTFKRYM. Tyr-73 serves as the catalytic Proton donor. NADP(+) contacts are provided by residues Asn-157, 185–188, 208–210, 283–286, and 308–310; these read TSSV, RDR, YGGM, and YWV. Ser-339 carries the phosphoserine modification. Lys-373 lines the NADP(+) pocket.

This sequence belongs to the zinc-containing alcohol dehydrogenase family. Quinone oxidoreductase subfamily. As to quaternary structure, homodimer or in a complex with other proteins. Interacts with ARS1.

It is found in the mitochondrion matrix. It catalyses the reaction a 2,3-saturated acyl-[ACP] + NADP(+) = a (2E)-enoyl-[ACP] + NADPH + H(+). The enzyme catalyses (2E,4E)-hexadienoyl-CoA + NADPH + H(+) = (4E)-hexenoyl-CoA + NADP(+). It carries out the reaction (2E)-hexenoyl-CoA + NADPH + H(+) = hexanoyl-CoA + NADP(+). Catalyzes the NADPH-dependent reduction of trans-2-enoyl thioesters in mitochondrial fatty acid synthesis (fatty acid synthesis type II). Fatty acid chain elongation in mitochondria uses acyl carrier protein (ACP) as an acyl group carrier, but the enzyme accepts both ACP and CoA thioesters as substrates in vitro. Required for respiration and the maintenance of the mitochondrial compartment. The protein is Enoyl-[acyl-carrier-protein] reductase, mitochondrial (ETR1) of Saccharomyces cerevisiae (strain ATCC 204508 / S288c) (Baker's yeast).